The primary structure comprises 387 residues: Phosphoglycerate kinase (387 aa).

Residues 21–23 (DLN), Arg-36, 59–62 (HLGR), Arg-113, and Arg-146 each bind substrate. ATP is bound by residues Lys-197, Glu-314, and 340-343 (GGDT).

This sequence belongs to the phosphoglycerate kinase family. Monomer.

The protein localises to the cytoplasm. It carries out the reaction (2R)-3-phosphoglycerate + ATP = (2R)-3-phospho-glyceroyl phosphate + ADP. It functions in the pathway carbohydrate degradation; glycolysis; pyruvate from D-glyceraldehyde 3-phosphate: step 2/5. The sequence is that of Phosphoglycerate kinase from Salmonella schwarzengrund (strain CVM19633).